A 652-amino-acid polypeptide reads, in one-letter code: MASLQISGSVKFEPFVGFNRIRHFRPIASLGFPRFRRRFSIGRSLLLRRSSSFSGDSRESDEERFITDAERDGSGSVLGFQLTPPGDQQTVSTSTGEITHHEEKKEAIDQIVMADFGVPGNRAVEEGAAEVGIPSGKAEVVNNLVFVTSEAAPYSKTGGLGDVCGSLPIALAGRGHRVMVISPRYLNGTAADKNYARAKDLGIRVTVNCFGGSQEVSFYHEYRDGVDWVFVDHKSYHRPGNPYGDSKGAFGDNQFRFTLLCHAACEAPLVLPLGGFTYGEKSLFLVNDWHAGLVPILLAAKYRPYGVYKDARSILIIHNLAHQGVEPAATYTNLGLPSEWYGAVGWVFPTWARTHALDTGEAVNVLKGAIVTSDRIITVSQGYAWEITTVEGGYGLQDLLSSRKSVINGITNGINVDEWNPSTDEHIPFHYSADDVSEKIKCKMALQKELGLPIRPECPMIGFIGRLDYQKGIDLIQTAGPDLMVDDIQFVMLGSGDPKYESWMRSMEETYRDKFRGWVGFNVPISHRITAGCDILLMPSRFEPCGLNQLYAMRYGTIPVVHGTGGLRDTVENFNPYAEGGAGTGTGWVFTPLSKDSMVSALRLAAATYREYKQSWEGLMRRGMTRNYSWENAAVQYEQVFQWVFMDPPYVS.

Residues 1–49 (MASLQISGSVKFEPFVGFNRIRHFRPIASLGFPRFRRRFSIGRSLLLRR) constitute a chloroplast transit peptide. Lys156 is an ADP-alpha-D-glucose binding site.

Belongs to the glycosyltransferase 1 family. Bacterial/plant glycogen synthase subfamily. In terms of tissue distribution, expressed in roots, leaves, stems, buds and flowers.

Its subcellular location is the plastid. The protein resides in the chloroplast. It localises to the amyloplast. The catalysed reaction is [(1-&gt;4)-alpha-D-glucosyl](n) + ADP-alpha-D-glucose = [(1-&gt;4)-alpha-D-glucosyl](n+1) + ADP + H(+). It functions in the pathway glycan biosynthesis; starch biosynthesis. Its function is as follows. Involved in the synthesis of short glycan chains within amylopectin in leaves. Is required to generate chains up to about a degree of polymerization of 10 (DP10). The sequence is that of Starch synthase 1, chloroplastic/amyloplastic (SS1) from Arabidopsis thaliana (Mouse-ear cress).